The primary structure comprises 252 residues: Triosephosphate isomerase (252 aa).

9 to 11 serves as a coordination point for substrate; it reads NWK. H100 functions as the Electrophile in the catalytic mechanism. E171 acts as the Proton acceptor in catalysis. Substrate contacts are provided by residues G177, S216, and 237–238; that span reads GG.

This sequence belongs to the triosephosphate isomerase family. In terms of assembly, homodimer.

It localises to the cytoplasm. It catalyses the reaction D-glyceraldehyde 3-phosphate = dihydroxyacetone phosphate. It functions in the pathway carbohydrate biosynthesis; gluconeogenesis. It participates in carbohydrate degradation; glycolysis; D-glyceraldehyde 3-phosphate from glycerone phosphate: step 1/1. In terms of biological role, involved in the gluconeogenesis. Catalyzes stereospecifically the conversion of dihydroxyacetone phosphate (DHAP) to D-glyceraldehyde-3-phosphate (G3P). The protein is Triosephosphate isomerase of Polynucleobacter necessarius subsp. necessarius (strain STIR1).